A 374-amino-acid polypeptide reads, in one-letter code: Putative serine/threonine-protein kinase ZK507.3 (374 aa).

A Protein kinase domain is found at 25–296; sequence WKVIVELGKG…CKLTLKEPLV (272 aa). Residues 31-39 and Lys60 each bind ATP; that span reads LGKGGYGTV. Residue Asp158 is the Proton acceptor of the active site. The disordered stretch occupies residues 302–374; the sequence is NDNESGSTPT…KTRNKKPSRK (73 aa). The span at 306–324 shows a compositional bias: low complexity; it reads SGSTPTTSATACSPSSSTG. The segment covering 334 to 343 has biased composition (polar residues); it reads IASNIDQKSI. Basic residues predominate over residues 364–374; that stretch reads TKTRNKKPSRK.

It belongs to the protein kinase superfamily. Ser/Thr protein kinase family.

It catalyses the reaction L-seryl-[protein] + ATP = O-phospho-L-seryl-[protein] + ADP + H(+). The enzyme catalyses L-threonyl-[protein] + ATP = O-phospho-L-threonyl-[protein] + ADP + H(+). The sequence is that of Putative serine/threonine-protein kinase ZK507.3 from Caenorhabditis elegans.